The sequence spans 134 residues: Acyl carrier protein, chloroplastic (134 aa).

A chloroplast-targeting transit peptide spans 1–51; it reads MSTTFCSSVSMQATSLAATTRISFQKPGLVSRTNLSFNLRRSIPTRLSVSC. The 76-residue stretch at 55 to 130 folds into the Carrier domain; it reads PETVEKVSKI…EAAELIEELV (76 aa). Ser90 is modified (O-(pantetheine 4'-phosphoryl)serine).

This sequence belongs to the acyl carrier protein (ACP) family. Post-translationally, 4'-phosphopantetheine is transferred from CoA to a specific serine of apo-ACP by acpS. This modification is essential for activity because fatty acids are bound in thioester linkage to the sulfhydryl of the prosthetic group. In terms of tissue distribution, seed.

It is found in the plastid. The protein localises to the chloroplast. The protein operates within lipid metabolism; fatty acid biosynthesis. Functionally, carrier of the growing fatty acid chain in fatty acid biosynthesis. The polypeptide is Acyl carrier protein, chloroplastic (ACL1.A2) (Brassica napus (Rape)).